We begin with the raw amino-acid sequence, 125 residues long: Small ribosomal subunit protein bS6 (125 aa).

The protein belongs to the bacterial ribosomal protein bS6 family.

Its function is as follows. Binds together with bS18 to 16S ribosomal RNA. The chain is Small ribosomal subunit protein bS6 from Baumannia cicadellinicola subsp. Homalodisca coagulata.